A 101-amino-acid polypeptide reads, in one-letter code: MAGQKIRIRLKAYDHEAIDASARKIVETVVRTGASVVGPVPLPTEKNVYCVIRSPHKYKDSREHFEMRTHKRLIDILDPTPKTVDALMRIDLPASVDVNIQ.

Belongs to the universal ribosomal protein uS10 family. As to quaternary structure, part of the 30S ribosomal subunit.

In terms of biological role, involved in the binding of tRNA to the ribosomes. The sequence is that of Small ribosomal subunit protein uS10 from Mycobacterium avium (strain 104).